A 615-amino-acid chain; its full sequence is Protein translocase subunit SecD (615 aa).

Helical transmembrane passes span 10–30, 452–472, 477–497, 504–524, 548–570, and 585–605; these read YVMLIVVIVIGLLYALPNLFG, QGLEACLAGLLVSILFMIIFY, LIATSALIANLILIVGIMSLL, MPGIAGIVLTLAVAVDANVLI, GAFSSIFDANITTLIKVIILYAV, and GVATSMFTAIVGTRAIVNLLY.

The protein belongs to the SecD/SecF family. SecD subfamily. Forms a complex with SecF. Part of the essential Sec protein translocation apparatus which comprises SecA, SecYEG and auxiliary proteins SecDF-YajC and YidC.

The protein resides in the cell inner membrane. Its function is as follows. Part of the Sec protein translocase complex. Interacts with the SecYEG preprotein conducting channel. SecDF uses the proton motive force (PMF) to complete protein translocation after the ATP-dependent function of SecA. This Shigella flexneri protein is Protein translocase subunit SecD.